The following is a 142-amino-acid chain: Putative pre-16S rRNA nuclease (142 aa).

Belongs to the YqgF nuclease family.

Its subcellular location is the cytoplasm. Its function is as follows. Could be a nuclease involved in processing of the 5'-end of pre-16S rRNA. The chain is Putative pre-16S rRNA nuclease from Lactobacillus delbrueckii subsp. bulgaricus (strain ATCC BAA-365 / Lb-18).